The sequence spans 99 residues: Transmembrane protein 14A (99 aa).

3 helical membrane passes run 1-21, 24-44, and 79-99; these read MDLI…FGYK, GGVP…YGAY, and PAGL…LLLL.

This sequence belongs to the TMEM14 family. In terms of tissue distribution, expressed at significantly higher levels in ovarian cancer tissues than in normal tissues (at protein level).

It localises to the mitochondrion membrane. It is found in the endoplasmic reticulum membrane. In terms of biological role, inhibits apoptosis via negative regulation of the mitochondrial outer membrane permeabilization involved in apoptotic signaling pathway. The chain is Transmembrane protein 14A (TMEM14A) from Homo sapiens (Human).